The primary structure comprises 186 residues: Protein C (186 aa).

The segment covering 1–15 (MSKTDWNASGLSRPS) has biased composition (polar residues). The segment at 1–44 (MSKTDWNASGLSRPSPSAHWPSRKLWQHGQKYQTTQDRSEPPAG) is disordered.

It belongs to the morbillivirus protein C family. Interacts with the phosphoprotein (via C-terminus); this interaction allows C to associate with the ribonucleocapsid.

The protein resides in the host nucleus. Its subcellular location is the host cytoplasmic vesicle. In terms of biological role, ribonucleocapsid-associated protein that interacts with the phosphoprotein (P), thereby increasing replication accuracy and processivity of the polymerase complex. This Homo sapiens (Human) protein is Protein C (P/V/C).